Reading from the N-terminus, the 150-residue chain is Anthrone oxygenase gedH (150 aa).

4 consecutive transmembrane segments (helical) span residues 1–21 (MANPAVGAMMGLSLVAVPVFL), 41–61 (GHKLMPTIAVATCALHGWVAA), 73–93 (PVLAAVTTITMVPFTWVCMVS), and 128–148 (LFPLAGAIVACQTLLKELVGG).

This sequence belongs to the anthrone oxygenase family.

It localises to the membrane. The enzyme catalyses emodin anthrone + O2 = emodin + H2O + H(+). The protein operates within secondary metabolite biosynthesis. Its function is as follows. Anthrone oxygenase; part of the gene cluster that mediates the biosynthesis of geodin, an intermediate in the biosynthesis of other natural products. The pathway begins with the synthesis of atrochrysone thioester by the polyketide synthase (PKS) gedC. The atrochrysone carboxyl ACP thioesterase gedB then breaks the thioester bond and releases the atrochrysone carboxylic acid from gedC. The atrochrysone carboxylic acid is then converted to atrochrysone which is further transformed into emodin anthrone. The next step is performed by the emodin anthrone oxygenase gedH that catalyzes the oxidation of emodinanthrone to emodin. Emodin O-methyltransferase encoded probably by gedA then catalyzes methylation of the 8-hydroxy group of emodin to form questin. Ring cleavage of questin by questin oxidase gedK leads to desmethylsulochrin via several intermediates including questin epoxide. Another methylation step probably catalyzed by methyltransferase gedG leads to the formation of sulochrin which is further converted to dihydrogeodin by the sulochrin halogenase gedL. Finally, the dihydrogeodin oxidase gedJ catalyzes the stereospecific phenol oxidative coupling reaction converting dihydrogeodin to geodin. This Aspergillus terreus (strain NIH 2624 / FGSC A1156) protein is Anthrone oxygenase gedH.